We begin with the raw amino-acid sequence, 481 residues long: tRNA-2-methylthio-N(6)-dimethylallyladenosine synthase (481 aa).

Residues 24–140 (KKLFIESYGC…LPNLLNEVEE (117 aa)) form the MTTase N-terminal domain. [4Fe-4S] cluster-binding residues include cysteine 33, cysteine 69, cysteine 103, cysteine 178, cysteine 182, and cysteine 185. The region spanning 164 to 411 (MSNGITALVA…DLQQKHAWWR (248 aa)) is the Radical SAM core domain. Positions 413–476 (EDFIGQTVEV…SGTLKGEAVG (64 aa)) constitute a TRAM domain.

The protein belongs to the methylthiotransferase family. MiaB subfamily. In terms of assembly, monomer. Requires [4Fe-4S] cluster as cofactor.

Its subcellular location is the cytoplasm. The catalysed reaction is N(6)-dimethylallyladenosine(37) in tRNA + (sulfur carrier)-SH + AH2 + 2 S-adenosyl-L-methionine = 2-methylsulfanyl-N(6)-dimethylallyladenosine(37) in tRNA + (sulfur carrier)-H + 5'-deoxyadenosine + L-methionine + A + S-adenosyl-L-homocysteine + 2 H(+). Functionally, catalyzes the methylthiolation of N6-(dimethylallyl)adenosine (i(6)A), leading to the formation of 2-methylthio-N6-(dimethylallyl)adenosine (ms(2)i(6)A) at position 37 in tRNAs that read codons beginning with uridine. This Flavobacterium psychrophilum (strain ATCC 49511 / DSM 21280 / CIP 103535 / JIP02/86) protein is tRNA-2-methylthio-N(6)-dimethylallyladenosine synthase.